The sequence spans 442 residues: UPF0597 protein HRM2_02820 (442 aa).

This sequence belongs to the UPF0597 family.

The protein is UPF0597 protein HRM2_02820 of Desulforapulum autotrophicum (strain ATCC 43914 / DSM 3382 / VKM B-1955 / HRM2) (Desulfobacterium autotrophicum).